Reading from the N-terminus, the 1678-residue chain is Clathrin heavy chain (1678 aa).

7 WD40-like repeat regions span residues Ser-24–Ser-67, Ala-68–Asp-107, Val-108–Asn-149, Gly-150–Glu-195, Gly-196–Gln-257, Asn-258–Asp-301, and Thr-302–Asp-330. 7 CHCR repeats span residues Val-538–Val-684, Ala-687–Ile-829, Ile-834–Asp-973, Leu-980–Ala-1125, Tyr-1129–Ala-1270, Leu-1275–Asn-1421, and Leu-1424–Phe-1567. The segment at Arg-1334 to Thr-1643 is involved in binding clathrin light chain. The segment at Glu-1552 to Tyr-1677 is trimerization.

Belongs to the clathrin heavy chain family. Clathrin triskelions, composed of 3 heavy chains and 3 light chains, are the basic subunits of the clathrin coat. Interacts with sau.

Its subcellular location is the cytoplasmic vesicle membrane. It is found in the membrane. It localises to the coated pit. Functionally, clathrin is the major protein of the polyhedral coat of coated pits and vesicles. The sequence is that of Clathrin heavy chain (Chc) from Drosophila melanogaster (Fruit fly).